A 192-amino-acid chain; its full sequence is Probable nicotinate-nucleotide adenylyltransferase (192 aa).

The protein belongs to the NadD family.

It carries out the reaction nicotinate beta-D-ribonucleotide + ATP + H(+) = deamido-NAD(+) + diphosphate. It functions in the pathway cofactor biosynthesis; NAD(+) biosynthesis; deamido-NAD(+) from nicotinate D-ribonucleotide: step 1/1. Catalyzes the reversible adenylation of nicotinate mononucleotide (NaMN) to nicotinic acid adenine dinucleotide (NaAD). This chain is Probable nicotinate-nucleotide adenylyltransferase, found in Cytophaga hutchinsonii (strain ATCC 33406 / DSM 1761 / CIP 103989 / NBRC 15051 / NCIMB 9469 / D465).